Reading from the N-terminus, the 172-residue chain is SsrA-binding protein (172 aa).

The protein belongs to the SmpB family.

The protein localises to the cytoplasm. Functionally, required for rescue of stalled ribosomes mediated by trans-translation. Binds to transfer-messenger RNA (tmRNA), required for stable association of tmRNA with ribosomes. tmRNA and SmpB together mimic tRNA shape, replacing the anticodon stem-loop with SmpB. tmRNA is encoded by the ssrA gene; the 2 termini fold to resemble tRNA(Ala) and it encodes a 'tag peptide', a short internal open reading frame. During trans-translation Ala-aminoacylated tmRNA acts like a tRNA, entering the A-site of stalled ribosomes, displacing the stalled mRNA. The ribosome then switches to translate the ORF on the tmRNA; the nascent peptide is terminated with the 'tag peptide' encoded by the tmRNA and targeted for degradation. The ribosome is freed to recommence translation, which seems to be the essential function of trans-translation. This chain is SsrA-binding protein, found in Dehalococcoides mccartyi (strain ATCC BAA-2266 / KCTC 15142 / 195) (Dehalococcoides ethenogenes (strain 195)).